A 330-amino-acid polypeptide reads, in one-letter code: 4-hydroxythreonine-4-phosphate dehydrogenase (330 aa).

The substrate site is built by His133 and Thr134. Residues His163, His208, and His263 each contribute to the a divalent metal cation site. Substrate-binding residues include Lys271, Asn280, and Arg289.

It belongs to the PdxA family. As to quaternary structure, homodimer. Zn(2+) serves as cofactor. The cofactor is Mg(2+). It depends on Co(2+) as a cofactor.

It is found in the cytoplasm. The enzyme catalyses 4-(phosphooxy)-L-threonine + NAD(+) = 3-amino-2-oxopropyl phosphate + CO2 + NADH. It participates in cofactor biosynthesis; pyridoxine 5'-phosphate biosynthesis; pyridoxine 5'-phosphate from D-erythrose 4-phosphate: step 4/5. Catalyzes the NAD(P)-dependent oxidation of 4-(phosphooxy)-L-threonine (HTP) into 2-amino-3-oxo-4-(phosphooxy)butyric acid which spontaneously decarboxylates to form 3-amino-2-oxopropyl phosphate (AHAP). In Azoarcus sp. (strain BH72), this protein is 4-hydroxythreonine-4-phosphate dehydrogenase.